Here is a 315-residue protein sequence, read N- to C-terminus: DNA-directed RNA polymerase subunit alpha (315 aa).

The segment at 1 to 228 (MIEIEKPKIE…EHLNLFIDLS (228 aa)) is alpha N-terminal domain (alpha-NTD). Residues 245–315 (KEKVLEMTIE…LGLSLAPSED (71 aa)) are alpha C-terminal domain (alpha-CTD).

This sequence belongs to the RNA polymerase alpha chain family. As to quaternary structure, homodimer. The RNAP catalytic core consists of 2 alpha, 1 beta, 1 beta' and 1 omega subunit. When a sigma factor is associated with the core the holoenzyme is formed, which can initiate transcription.

The catalysed reaction is RNA(n) + a ribonucleoside 5'-triphosphate = RNA(n+1) + diphosphate. DNA-dependent RNA polymerase catalyzes the transcription of DNA into RNA using the four ribonucleoside triphosphates as substrates. The sequence is that of DNA-directed RNA polymerase subunit alpha from Acetivibrio thermocellus (strain ATCC 27405 / DSM 1237 / JCM 9322 / NBRC 103400 / NCIMB 10682 / NRRL B-4536 / VPI 7372) (Clostridium thermocellum).